Here is a 686-residue protein sequence, read N- to C-terminus: Chondroitin synthase (686 aa).

Residues 130-417 (YVWAGKRKEL…LLQQKVPYFY (288 aa)) are galactosaminyltransferase; A1 domain. UDP-N-acetyl-alpha-D-galactosamine contacts are provided by residues Pro-157, Arg-161, Asp-188, Tyr-217, Arg-223, and 239-240 (DC). Asp-241 serves as a coordination point for Mn(2+). 361–362 (ED) lines the UDP-N-acetyl-alpha-D-galactosamine pocket. Mn(2+) is bound at residue His-386. The glucuronosyltransferase; A2 domain stretch occupies residues 418–682 (RKKEKIESAT…ECRKYTWEKI (265 aa)). UDP-alpha-D-glucuronate is bound by residues Tyr-441, Asp-469, and 517–520 (QLDS). Asp-521 lines the Mn(2+) pocket. UDP-alpha-D-glucuronate contacts are provided by residues His-581 and 603-604 (AV). Position 631 (His-631) interacts with Mn(2+).

The protein belongs to the glycosyltransferase 2 family. CS/HAS subfamily. Mn(2+) serves as cofactor.

The catalysed reaction is 3-O-(beta-D-GlcA-(1-&gt;3)-beta-D-GalNAc-(1-&gt;4)-beta-D-GlcA-(1-&gt;3)-beta-D-Gal-(1-&gt;3)-beta-D-Gal-(1-&gt;4)-beta-D-Xyl)-L-seryl-[protein] + UDP-N-acetyl-alpha-D-galactosamine = 3-O-(beta-D-GalNAc-(1-&gt;4)-beta-D-GlcA-(1-&gt;3)-beta-D-GalNAc-(1-&gt;4)-beta-D-GlcA-(1-&gt;3)-beta-D-Gal-(1-&gt;3)-beta-D-Gal-(1-&gt;4)-beta-D-Xyl)-L-seryl-[protein] + UDP + H(+). It carries out the reaction 3-O-{beta-D-GlcA-(1-&gt;3)-[beta-D-GalNAc-(1-&gt;4)-beta-D-GlcA-(1-&gt;3)](n)-beta-D-GalNAc-(1-&gt;4)-beta-D-GlcA-(1-&gt;3)-beta-D-Gal-(1-&gt;3)-beta-D-Gal-(1-&gt;4)-beta-D-Xyl}-L-seryl-[protein] + UDP-N-acetyl-alpha-D-galactosamine = 3-O-{[beta-D-GalNAc-(1-&gt;4)-beta-D-GlcA-(1-&gt;3)](n+1)-beta-D-GalNAc-(1-&gt;4)-beta-D-GlcA-(1-&gt;3)-beta-D-Gal-(1-&gt;3)-beta-D-Gal-(1-&gt;4)-beta-D-Xyl}-L-seryl-[protein] + UDP + H(+). It catalyses the reaction 3-O-(beta-D-GalNAc-(1-&gt;4)-beta-D-GlcA-(1-&gt;3)-beta-D-Gal-(1-&gt;3)-beta-D-Gal-(1-&gt;4)-beta-D-Xyl)-L-seryl-[protein] + UDP-alpha-D-glucuronate = 3-O-(beta-D-GlcA-(1-&gt;3)-beta-D-GalNAc-(1-&gt;4)-beta-D-GlcA-(1-&gt;3)-beta-D-Gal-(1-&gt;3)-beta-D-Gal-(1-&gt;4)-beta-D-Xyl)-L-seryl-[protein] + UDP + H(+). The enzyme catalyses 3-O-{[beta-D-GalNAc-(1-&gt;4)-beta-D-GlcA-(1-&gt;3)](n)-beta-D-GalNAc-(1-&gt;4)-beta-D-GlcA-(1-&gt;3)-beta-D-Gal-(1-&gt;3)-beta-D-Gal-(1-&gt;4)-beta-D-Xyl}-L-seryl-[protein] + UDP-alpha-D-glucuronate = 3-O-{beta-D-GlcA-(1-&gt;3)-[beta-D-GalNAc-(1-&gt;4)-beta-D-GlcA-(1-&gt;3)](n)-beta-D-GalNAc-(1-&gt;4)-beta-D-GlcA-(1-&gt;3)-beta-D-Gal-(1-&gt;3)-beta-D-Gal-(1-&gt;4)-beta-D-Xyl}-L-seryl-[protein] + UDP + H(+). Functionally, glycosyltransferase that catalyzes elongation of chondroitin, a polysaccharide composed of a repeating disaccharide of N-acetylgalactosamine (GalNAc) and glucuronic acid (GlcUA) units, by alternatively transferring the GlcUA and GalNAc moiety from UDP-GlcUA and UDP-GalNAc to the non-reducing ends of the chondroitin chain. Each chondroitin unit has the composition beta-(1-&gt;4)-GlcUA-beta-(1-&gt;3)-GalNAc. The polypeptide is Chondroitin synthase (kfoC) (Escherichia coli).